Here is a 493-residue protein sequence, read N- to C-terminus: Cytochrome P450 710A3 (493 aa).

Residues 5–25 (VSLFASLTPYLVSALLLFLLL) traverse the membrane as a helical segment. Cys435 contacts heme.

The protein belongs to the cytochrome P450 family. Heme serves as cofactor. In terms of tissue distribution, expressed in stems. Detected in primary root caps and immature petals.

The protein resides in the membrane. The catalysed reaction is 5-dehydroepisterol + NADPH + O2 + H(+) = ergosta-5,7,22,24(28)-tetraen-3beta-ol + NADP(+) + 2 H2O. Functionally, required to form the C-22 double bond in the sterol side chain. Possesses in vitro C-22 desaturase activity toward beta-sitosterol and produces stigmasterol. This chain is Cytochrome P450 710A3, found in Arabidopsis thaliana (Mouse-ear cress).